A 348-amino-acid chain; its full sequence is Rhodopsin (348 aa).

Met-1 carries the N-acetylmethionine modification. The Extracellular segment spans residues 1–36; sequence MNGTEGPDFYIPMSNQTGVVRSPFEYPQYYLAEPWQ. N-linked (GlcNAc...) asparagine glycans are attached at residues Asn-2 and Asn-15. A helical transmembrane segment spans residues 37–61; it reads FSMLAAYMFLLIVLGFPINFLTLYV. Residues 62-73 are Cytoplasmic-facing; sequence TVQHKKLRTPLN. Residues 74–96 form a helical membrane-spanning segment; that stretch reads YILLNLAVADLFMVLGGFTTTLY. The Extracellular segment spans residues 97–110; the sequence is TSLHGYFVFGPTGC. The cysteines at positions 110 and 187 are disulfide-linked. Residues 111–133 traverse the membrane as a helical segment; sequence NVEGFFATLGGEIALWSLVVLAI. A 'Ionic lock' involved in activated form stabilization motif is present at residues 134–136; sequence ERY. At 134-152 the chain is on the cytoplasmic side; that stretch reads ERYVVVCKPMSNFRFGENH. Residues 153–173 form a helical membrane-spanning segment; the sequence is AIMGVAFTWIMALACAAPPLV. Residues 174–202 are Extracellular-facing; the sequence is GWSRYIPEGMQCSCGIDYYTLKPEVNNES. Glu-201 lines the Zn(2+) pocket. A helical transmembrane segment spans residues 203–224; it reads FVIYMFVVHFTIPLIIIFFCYG. Over 225–252 the chain is Cytoplasmic; the sequence is QLVFTVKEAAAQQQESATTQKAEKEVTR. A helical membrane pass occupies residues 253–274; that stretch reads MVIIMVIAFLICWVPYASVAFY. The Extracellular portion of the chain corresponds to 275–286; the sequence is IFTHQGSNFGPI. Position 279 (Gln-279) interacts with Zn(2+). Residues 287–308 form a helical membrane-spanning segment; it reads FMTIPAFFAKSSSIYNPVIYIM. Lys-296 is modified (N6-(retinylidene)lysine). Over 309–348 the chain is Cytoplasmic; the sequence is MNKQFRNCMLTTICCGKNPLGDDEASATASKTETSQVAPA. S-palmitoyl cysteine attachment occurs at residues Cys-322 and Cys-323. Residues 330-348 form an interaction with SAG region; the sequence is DDEASATASKTETSQVAPA. Ser-334 bears the Phosphoserine mark. Thr-336 is modified (phosphothreonine). Position 338 is a phosphoserine (Ser-338). 2 positions are modified to phosphothreonine: Thr-340 and Thr-342. Ser-343 is modified (phosphoserine).

The protein belongs to the G-protein coupled receptor 1 family. Opsin subfamily. Homodimer. May form a complex composed of RHO, GRK1 and RCVRN in a Ca(2+)-dependent manner; RCVRN prevents the interaction between GRK1 and RHO. Interacts with GRK1. Interacts (phosphorylated form) with SAG. Interacts with GNAT1. Interacts with GNAT3. SAG and G-proteins compete for a common binding site. Interacts with PRCD; the interaction promotes PRCD stability. Forms a complex with ASAP1 and ARF4. Forms a complex with ASAP1, RAB11A, Rabin8/RAB3IP, ARF4 and RAB11FIP3; the complex regulates Golgi-to-cilia rhodopsin/RHO transport in photoreceptors. Post-translationally, phosphorylated on some or all of the serine and threonine residues present in the C-terminal region. In terms of processing, contains one covalently linked retinal chromophore. Upon light absorption, the covalently bound 11-cis-retinal is converted to all-trans-retinal. After hydrolysis of the Schiff base and release of the covalently bound all-trans-retinal, active rhodopsin is regenerated by binding of a fresh molecule of 11-cis-retinal.

It localises to the membrane. The protein localises to the cell projection. It is found in the cilium. The protein resides in the photoreceptor outer segment. Photoreceptor required for image-forming vision at low light intensity. Required for photoreceptor cell viability after birth. Light-induced isomerization of 11-cis to all-trans retinal triggers a conformational change that activates signaling via G-proteins. Subsequent receptor phosphorylation mediates displacement of the bound G-protein alpha subunit by the arrestin SAG and terminates signaling. The chain is Rhodopsin (RHO) from Oryctolagus cuniculus (Rabbit).